Reading from the N-terminus, the 807-residue chain is Glycerol-3-phosphate acyltransferase (807 aa).

The short motif at 305–310 (CHRSHM) is the HXXXXD motif element.

The protein belongs to the GPAT/DAPAT family.

Its subcellular location is the cell inner membrane. It catalyses the reaction sn-glycerol 3-phosphate + an acyl-CoA = a 1-acyl-sn-glycero-3-phosphate + CoA. It participates in phospholipid metabolism; CDP-diacylglycerol biosynthesis; CDP-diacylglycerol from sn-glycerol 3-phosphate: step 1/3. The protein is Glycerol-3-phosphate acyltransferase of Escherichia coli O139:H28 (strain E24377A / ETEC).